The chain runs to 686 residues: Translation initiation factor IF-2 (686 aa).

The interval 35 to 99 (MSTVEDETAE…EHGQKDTDRR (65 aa)) is disordered. The span at 50 to 68 (LQEEDKPEEKISKKEPDKK) shows a compositional bias: basic and acidic residues. The span at 69–79 (DRKKTKGKKQM) shows a compositional bias: basic residues. The segment covering 87-99 (EGTEHGQKDTDRR) has biased composition (basic and acidic residues). Residues 186 to 355 (LRPPIVTVMG…LLVAEMEELK (170 aa)) form the tr-type G domain. Residues 195–202 (GHVDHGKT) form a G1 region. 195 to 202 (GHVDHGKT) contacts GTP. The segment at 220–224 (GITQH) is G2. The segment at 241 to 244 (DTPG) is G3. Residues 241–245 (DTPGH) and 295–298 (NKVD) contribute to the GTP site. The interval 295-298 (NKVD) is G4. The segment at 331–333 (SAL) is G5.

The protein belongs to the TRAFAC class translation factor GTPase superfamily. Classic translation factor GTPase family. IF-2 subfamily.

It is found in the cytoplasm. One of the essential components for the initiation of protein synthesis. Protects formylmethionyl-tRNA from spontaneous hydrolysis and promotes its binding to the 30S ribosomal subunits. Also involved in the hydrolysis of GTP during the formation of the 70S ribosomal complex. The sequence is that of Translation initiation factor IF-2 from Halothermothrix orenii (strain H 168 / OCM 544 / DSM 9562).